The sequence spans 1047 residues: Probable phospholipid-transporting ATPase IIA (1047 aa).

Position 2 is an N-acetylthreonine (Thr-2). Topologically, residues 2–69 are cytoplasmic; sequence TDNIPLQPVR…NQKYNFFTFL (68 aa). The chain crosses the membrane as a helical span at residues 70–91; the sequence is PGVLFNQFKYFFNLYFLLLACS. Topologically, residues 92–96 are extracellular; the sequence is QFVPE. A helical transmembrane segment spans residues 97-119; it reads MRLGALYTYWVPLGFVLAVTVIR. At 120 to 303 the chain is on the cytoplasmic side; that stretch reads EAVEEIRCYV…GLFDLEVNCL (184 aa). A helical membrane pass occupies residues 304 to 325; it reads TKILFGALVVVSLVMVALQHFA. Residues 326–332 lie on the Extracellular side of the membrane; it reads GRWYLQI. A helical transmembrane segment spans residues 333-354; that stretch reads IRFLLLFSNIIPISLRVNLDMG. Residues 355 to 841 are Cytoplasmic-facing; sequence KIVYSWVIRR…GRNSYKRSAA (487 aa). The active-site 4-aspartylphosphate intermediate is Asp-391. ATP contacts are provided by Asp-391, Lys-392, Thr-393, Glu-502, Phe-544, Lys-549, Lys-568, Arg-597, Thr-677, Gly-678, Asp-679, Arg-759, and Lys-765. Asp-391 contributes to the Mg(2+) binding site. Thr-393 is a Mg(2+) binding site. Residue Asp-785 participates in Mg(2+) binding. ATP-binding residues include Asn-788 and Asp-789. Residue Asp-789 participates in Mg(2+) binding. Residues 842-862 form a helical membrane-spanning segment; sequence LSQFVIHRSLCISTMQAVFSS. At 863–874 the chain is on the extracellular side; the sequence is VFYFASVPLYQG. Residues 875-893 form a helical membrane-spanning segment; the sequence is FLIIGYSTIYTMFPVFSLV. Topologically, residues 894-923 are cytoplasmic; it reads LDKDVKSEVAMLYPELYKDLLKGRPLSYKT. A helical transmembrane segment spans residues 924 to 942; it reads FLIWVLISIYQGSTIMYGA. Residues 943-949 are Extracellular-facing; sequence LLLFESE. Residues 950–972 traverse the membrane as a helical segment; sequence FVHIVAISFTSLILTELLMVALT. Residues 973–978 lie on the Cytoplasmic side of the membrane; it reads IQTWHW. Residues 979-999 form a helical membrane-spanning segment; sequence LMTVAELLSLACYIASLVFLH. Residues 1000-1006 are Extracellular-facing; the sequence is EFIDVYF. A helical membrane pass occupies residues 1007–1030; sequence IATLSFLWKVSVITLVSCLPLYVL. Residues 1031-1047 lie on the Cytoplasmic side of the membrane; that stretch reads KYLRRRFSPPSYSKLTS.

The protein belongs to the cation transport ATPase (P-type) (TC 3.A.3) family. Type IV subfamily. Heterotrimer with MON2 and DOP1B; this complex regulates SNX3-retromer mediated endosomal sorting of WLS. Interacts with RAB5A and RAB11A. Mg(2+) is required as a cofactor.

The protein localises to the early endosome membrane. It localises to the recycling endosome membrane. It is found in the late endosome membrane. Its subcellular location is the golgi apparatus. The protein resides in the trans-Golgi network membrane. The protein localises to the cell membrane. It carries out the reaction ATP + H2O + phospholipidSide 1 = ADP + phosphate + phospholipidSide 2.. Functionally, plays a role in regulating membrane trafficking of cargo proteins, namely endosome to plasma membrane recycling, probably acting through RAB5 and RAB11 activation. Also involved in endosome to trans-Golgi network retrograde transport. In complex with MON2 and DOP1B, regulates SNX3 retromer-mediated endosomal sorting of WLS, a transporter of Wnt morphogens in developing tissues. Participates in the formation of endosomal carriers that direct WLS trafficking back to Golgi, away from lysosomal degradation. Appears to be implicated in intercellular communication by negatively regulating the release of exosomes. The flippase activity towards membrane lipids and its role in membrane asymmetry remains to be proved. Required for the maintenance of neurite morphology and synaptic transmission. This is Probable phospholipid-transporting ATPase IIA from Homo sapiens (Human).